The chain runs to 2045 residues: Host cell factor 1 (2045 aa).

At A2 the chain carries N-acetylalanine. S6 is subject to Phosphoserine. 5 Kelch repeats span residues 44–89, 93–140, 148–194, 217–265, and 266–313; these read LIVV…GFVC, RLLV…RLGH, KCYL…ITYG, KLVI…TIGN, and KMYV…LMDT. Glycyl lysine isopeptide (Lys-Gly) (interchain with G-Cter in ubiquitin) cross-links involve residues K105, K163, and K244. K282 is covalently cross-linked (Glycyl lysine isopeptide (Lys-Gly) (interchain with G-Cter in SUMO2)). K288 bears the N6-acetyllysine mark. K363 participates in a covalent cross-link: Glycyl lysine isopeptide (Lys-Gly) (interchain with G-Cter in ubiquitin). The Fibronectin type-III 1 domain occupies 366 to 457; that stretch reads PPARVQLVRA…VPQAATAPPS (92 aa). The disordered stretch occupies residues 407 to 434; sequence ATATSPTPNPVPSVPANPPKSPAPAAAA. Position 411 is a phosphoserine (S411). Positions 413–428 are enriched in pro residues; sequence TPNPVPSVPANPPKSP. The segment at 500–550 is required for interaction with OGT; sequence LVTMRPASQAGKAPVTVTSLPASVRMVVPTQSAQGTVIGSNPQMSGMAALA. 2 positions are modified to omega-N-methylarginine: R504 and R524. A phosphoserine mark is found at S598, S666, and S669. Residues 610 to 722 are interaction with SIN3A; it reads LKTAAAQVGT…KGPLPAGTIL (113 aa). The interval 750-902 is interaction with ZBTB17; that stretch reads ILGISSVSPS…SLAGAGAHST (153 aa). The residue at position 813 (K813) is an N6-acetyllysine. The interval 813-912 is interaction with GABP2; the sequence is KIITAVPKIA…SASLATPITT (100 aa). 3 HCF repeat repeats span residues 1010–1035, 1072–1097, and 1101–1126; these read TLVC…TVVA, VRVC…ATSN, and QHGC…AMSS. Residues 1157 to 1182 form an HCF repeat 4; degenerate repeat; the sequence is VQGTVKPQCQTQQTNMTTTTMTVQAT. S1204 is modified (phosphoserine). At R1216 the chain carries Asymmetric dimethylarginine. 4 disordered regions span residues 1219–1242, 1302–1375, 1444–1475, and 1494–1525; these read LSGP…YTTN, PCET…TSTG, TVTS…STNI, and TTVT…QLPP. The residue at position 1223 (S1223) is a Phosphoserine. HCF repeat repeat units lie at residues 1295–1320 and 1323–1348; these read TQVC…SNAG and QRVC…ATSN. The span at 1308–1321 shows a compositional bias: low complexity; it reads TGTTNTATTSNAGS. An HCF repeat 7; degenerate repeat occupies 1358 to 1383; it reads QQPASGHPCETHQTTSTGTTMSVSVG. An HCF repeat 8 repeat occupies 1423-1448; that stretch reads QRVCSNPPCETHETGTTHTATTVTSN. Position 1500 is a phosphothreonine (T1500). Pro residues predominate over residues 1502-1511; it reads VPGPSVPPPE. Phosphoserine is present on residues S1506, S1516, and S1781. Fibronectin type-III domains are found at residues 1808–1898 and 1900–2016; these read PPPP…TCLP and FPGA…TSKD. Glycyl lysine isopeptide (Lys-Gly) (interchain with G-Cter in ubiquitin) cross-links involve residues K1817 and K1818. Position 1848 is a phosphoserine (S1848). Residues 2004–2045 form a disordered region; it reads ATQVRWLQETSKDSSGTKPASKRPMSSPEMKSAPKKSKADGQ. K2015 carries the post-translational modification N6-acetyllysine. K2034 is covalently cross-linked (Glycyl lysine isopeptide (Lys-Gly) (interchain with G-Cter in SUMO2)).

In terms of assembly, composed predominantly of six polypeptides ranging from 110 to 150 kDa and a minor 300 kDa polypeptide. The majority of N- and C-terminal cleavage products remain tightly, albeit non-covalently, associated. Interacts with POU2F1, CREB3, ZBTB17, EGR2, E2F4, CREBZF, SP1, GABP2, Sin3 HDAC complex (SIN3A, HDAC1, HDAC2, SUDS3), SAP30, SIN3B and FHL2. Component of a MLL1 complex, composed of at least the core components KMT2A/MLL1, ASH2L, HCFC1, WDR5 and RBBP5, as well as the facultative components BACC1, CHD8, DPY30, E2F6, HCFC2, HSP70, INO80C, KANSL1, LAS1L, MAX, MCRS1, MEN1, MGA, KAT8, PELP1, PHF20, PRP31, RING2, RUVBL1, RUVBL2, SENP3, TAF1, TAF4, TAF6, TAF7, TAF9 and TEX10. Component of a THAP1/THAP3-HCFC1-OGT complex that is required for the regulation of the transcriptional activity of RRM1. Interacts directly with THAP3 (via its HBM). Interacts (via the Kelch-repeat domain) with THAP1 (via the HBM); the interaction recruits HCHC1 to the RRM1. Interacts with THAP7 and THAP11 (via the HMB). Interacts directly with OGT; the interaction, which requires the HCFC1 cleavage site domain, glycosylates and promotes the proteolytic processing of HCFC1 and retains OGT in the nucleus. Component of the SET1 complex, at least composed of the catalytic subunit (SETD1A or SETD1B), WDR5, WDR82, RBBP5, ASH2L, CXXC1, HCFC1 and DPY30. Component of the NSL complex at least composed of MOF/KAT8, KANSL1, KANSL2, KANSL3, MCRS1, PHF20, OGT1/OGT, WDR5 and HCFC1. Component of a complex at least composed of ZNF335, HCFC1, CCAR2, EMSY, MKI67, RBBP5, ASH2L and WDR5; the complex is formed as a result of interactions between components of a nuclear receptor-mediated transcription complex and a histone methylation complex. Within the complex interacts with ZNF335. Interacts with TET2 and TET3. Interacts with HCFC1R1. Interacts with THAP11. Interacts (via Kelch domain) with KMT2E (via HBM motif). Interacts with E2F1. Accessory scaffold component of the polycomb repressive deubiquitinase (PR-DUB) complex, at least composed of BAP1, one of ASXL1, ASXL2 or (probably) ASXL3 and one of MBD5 or MBD6; the PR-DUB core associates with a number of accessory proteins, including FOXK1, FOXK2, KDM1B, HCFC1, YY1 and OGT. Interacts with YY1 (via Gly-rich region); the interaction is direct. Interacts with BAP1 (via HBM-like motif). In terms of processing, proteolytically cleaved at one or several PPCE--THET sites within the HCF repeats. Further cleavage of the primary N- and C-terminal chains results in a 'trimming' and accumulation of the smaller chains. Cleavage is promoted by O-glycosylation. O-glycosylated. GlcNAcylation by OGT promotes proteolytic processing. Post-translationally, ubiquitinated. Lys-1817 and Lys-1818 are ubiquitinated both via 'Lys-48'- and 'Lys-63'-linked polyubiquitin chains. BAP1 mediated deubiquitination of 'Lys-48'-linked polyubiquitin chains; deubiquitination by BAP1 does not seem to stabilize the protein. Expressed in liver, pituitary gland, skeletal muscle, kidney, eye and brain (at protein level). Also observed at low level in heart, spleen and lung.

It is found in the nucleus. The protein resides in the cytoplasm. Transcriptional coregulator. Serves as a scaffold protein, bridging interactions between transcription factors, including THAP11 and ZNF143, and transcriptional coregulators. Involved in control of the cell cycle. Also antagonizes transactivation by ZBTB17 and GABP2; represses ZBTB17 activation of the p15(INK4b) promoter and inhibits its ability to recruit p300. Coactivator for EGR2 and GABP2. Tethers the chromatin modifying Set1/Ash2 histone H3 'Lys-4' methyltransferase (H3K4me) and Sin3 histone deacetylase (HDAC) complexes (involved in the activation and repression of transcription respectively) together. As part of the NSL complex it may be involved in acetylation of nucleosomal histone H4 on several lysine residues. Recruits KMT2E to E2F1 responsive promoters promoting transcriptional activation and thereby facilitates G1 to S phase transition. Modulates expression of homeobox protein PDX1, perhaps acting in concert with transcription factor E2F1, thereby regulating pancreatic beta-cell growth and glucose-stimulated insulin secretion. May negatively modulate transcriptional activity of FOXO3. The protein is Host cell factor 1 of Mus musculus (Mouse).